We begin with the raw amino-acid sequence, 72 residues long: Conotoxin 3 (72 aa).

The signal sequence occupies residues 1 to 22; it reads MKLTCVVIVAVLLLTACQLITA. Residues 23–46 constitute a propeptide that is removed on maturation; it reads DDSRGTQEHRALRSDTKLSMLTLR. 3 disulfides stabilise this stretch: cysteine 47-cysteine 61, cysteine 54-cysteine 64, and cysteine 60-cysteine 71.

It belongs to the conotoxin O1 superfamily. As to expression, expressed by the venom duct.

The protein resides in the secreted. The protein is Conotoxin 3 of Conus striatus (Striated cone).